Here is a 642-residue protein sequence, read N- to C-terminus: 1-deoxy-D-xylulose-5-phosphate synthase 2 (642 aa).

Residues histidine 73 and serine 113 to alanine 115 each bind thiamine diphosphate. A Mg(2+)-binding site is contributed by aspartate 144. Thiamine diphosphate is bound by residues glycine 145–alanine 146, asparagine 174, tyrosine 285, and glutamate 366. Residue asparagine 174 participates in Mg(2+) binding.

This sequence belongs to the transketolase family. DXPS subfamily. As to quaternary structure, homodimer. Requires Mg(2+) as cofactor. It depends on thiamine diphosphate as a cofactor.

It catalyses the reaction D-glyceraldehyde 3-phosphate + pyruvate + H(+) = 1-deoxy-D-xylulose 5-phosphate + CO2. The protein operates within metabolic intermediate biosynthesis; 1-deoxy-D-xylulose 5-phosphate biosynthesis; 1-deoxy-D-xylulose 5-phosphate from D-glyceraldehyde 3-phosphate and pyruvate: step 1/1. Functionally, catalyzes the acyloin condensation reaction between C atoms 2 and 3 of pyruvate and glyceraldehyde 3-phosphate to yield 1-deoxy-D-xylulose-5-phosphate (DXP). This is 1-deoxy-D-xylulose-5-phosphate synthase 2 from Streptomyces coelicolor (strain ATCC BAA-471 / A3(2) / M145).